We begin with the raw amino-acid sequence, 840 residues long: Heat shock 70 kDa protein 4 (840 aa).

Lys-53 is subject to N6-acetyllysine. Ser-76 carries the phosphoserine modification. Phosphotyrosine is present on residues Tyr-89 and Tyr-336. Residues Ser-393 and Ser-415 each carry the phosphoserine modification. Residue Lys-430 is modified to N6-acetyllysine. The segment at 500–575 is disordered; sequence VHKSEENEEP…QAKKAKVKTS (76 aa). Positions 514 to 533 are enriched in basic and acidic residues; that stretch reads QNAKEEEKMQVDQEEPHVEE. The residue at position 538 (Thr-538) is a Phosphothreonine. Ser-546 and Ser-647 each carry phosphoserine. Residue Tyr-660 is modified to Phosphotyrosine. Lys-679 carries the N6-acetyllysine modification. Ser-756 carries the phosphoserine modification. Lys-773 carries the N6-methyllysine modification. The tract at residues 783–840 is disordered; it reads ISKPKPKVEPPKEEQKNAEQNGPVDGQGDNPGPQAAEQGTDAAVPSDSDKKLPEMDID. Basic and acidic residues-rich tracts occupy residues 788–799 and 829–840; these read PKVEPPKEEQKN and DSDKKLPEMDID.

Belongs to the heat shock protein 70 family. In terms of assembly, interacts with TJP1/ZO-1.

It localises to the cytoplasm. The protein is Heat shock 70 kDa protein 4 (HSPA4) of Pongo abelii (Sumatran orangutan).